Reading from the N-terminus, the 198-residue chain is Recombination protein RecR (198 aa).

The C4-type zinc-finger motif lies at 57-72 (CSVCGHITDKDPCYIC). The region spanning 80-175 (SVLCVVQESK…KVTRIAHGLP (96 aa)) is the Toprim domain.

This sequence belongs to the RecR family.

Its function is as follows. May play a role in DNA repair. It seems to be involved in an RecBC-independent recombinational process of DNA repair. It may act with RecF and RecO. The sequence is that of Recombination protein RecR from Listeria innocua serovar 6a (strain ATCC BAA-680 / CLIP 11262).